The primary structure comprises 157 residues: Ribosome maturation factor RimP (157 aa).

It belongs to the RimP family.

It localises to the cytoplasm. Functionally, required for maturation of 30S ribosomal subunits. The protein is Ribosome maturation factor RimP of Bacillus licheniformis (strain ATCC 14580 / DSM 13 / JCM 2505 / CCUG 7422 / NBRC 12200 / NCIMB 9375 / NCTC 10341 / NRRL NRS-1264 / Gibson 46).